The chain runs to 684 residues: Glycine--tRNA ligase beta subunit (684 aa).

The protein belongs to the class-II aminoacyl-tRNA synthetase family. In terms of assembly, tetramer of two alpha and two beta subunits.

It is found in the cytoplasm. It catalyses the reaction tRNA(Gly) + glycine + ATP = glycyl-tRNA(Gly) + AMP + diphosphate. This Ectopseudomonas mendocina (strain ymp) (Pseudomonas mendocina) protein is Glycine--tRNA ligase beta subunit.